The sequence spans 343 residues: MATLGHTFPFYAGPKPTFPMDTTLASIIMIFLTALATFIVILPGIRGKTRLFWLLRVVTSLFIGAAILAVNFSSEWSVGQVSTNTSYKAFSSEWISADIGLQVGLGGVNITLTGTPVQQLNETINYNEEFTWRLGENYAEEYAKALEKGLPDPVLYLAEKFTPRSPCGLYRQYRLAGHYTSAMLWVAFLCWLLANVMLSMPVLVYGGYMLLATGIFQLLALLFFSMATSLTSPCPLHLGASVLHTHHGPAFWITLTTGLLCVLLGLAMAVAHRMQPHRLKAFFNQSVDEDPMLEWSPEEGGLLSPRYRSMADSPKSQDIPLSEASSTKAYCKEAHPKDPDCAL.

Residues 1–24 (MATLGHTFPFYAGPKPTFPMDTTL) are Extracellular-facing. Residues 25–45 (ASIIMIFLTALATFIVILPGI) form a helical membrane-spanning segment. Residues 46–51 (RGKTRL) lie on the Cytoplasmic side of the membrane. The helical transmembrane segment at 52 to 72 (FWLLRVVTSLFIGAAILAVNF) threads the bilayer. The Extracellular portion of the chain corresponds to 73–183 (SSEWSVGQVS…RLAGHYTSAM (111 aa)). Residues asparagine 84, asparagine 109, and asparagine 121 are each glycosylated (N-linked (GlcNAc...) asparagine). Residues 184-204 (LWVAFLCWLLANVMLSMPVLV) traverse the membrane as a helical segment. Topologically, residues 205–206 (YG) are cytoplasmic. A helical transmembrane segment spans residues 207–227 (GYMLLATGIFQLLALLFFSMA). Residues 228 to 249 (TSLTSPCPLHLGASVLHTHHGP) lie on the Extracellular side of the membrane. Residues 250–270 (AFWITLTTGLLCVLLGLAMAV) traverse the membrane as a helical segment. The Cytoplasmic segment spans residues 271–343 (AHRMQPHRLK…AHPKDPDCAL (73 aa)). The interval 306 to 343 (RYRSMADSPKSQDIPLSEASSTKAYCKEAHPKDPDCAL) is disordered. Over residues 330-343 (YCKEAHPKDPDCAL) the composition is skewed to basic and acidic residues.

The protein belongs to the DUOXA family. In terms of assembly, may interact with NUMB. Specifically expressed in thyroid gland. Also detected in esophagus.

Its subcellular location is the membrane. Functionally, may be required for the maturation and the transport from the endoplasmic reticulum to the plasma membrane of functional DUOX1. This Homo sapiens (Human) protein is Dual oxidase maturation factor 1 (DUOXA1).